Reading from the N-terminus, the 152-residue chain is Transcriptional regulator MraZ (152 aa).

2 consecutive SpoVT-AbrB domains span residues 5–52 and 81–124; these read ASAI…PADE and AHEI…DEAQ.

This sequence belongs to the MraZ family. Forms oligomers.

The protein localises to the cytoplasm. Its subcellular location is the nucleoid. The protein is Transcriptional regulator MraZ of Shewanella amazonensis (strain ATCC BAA-1098 / SB2B).